The following is a 279-amino-acid chain: uncharacterized protein (279 aa).

Transmembrane regions (helical) follow at residues 29–49 (PYNMIAGAIGAVVLTILALVF), 77–97 (VLYALAPLIPLVILVIGGTSL), 105–125 (WTKMGVPQAMLIGAIYGIIVT), 147–167 (VLGIIIAASVFVAGLKSTGAV), 186–206 (TIGPFLMGLITGSGDAAAIAF), and 240–260 (PIAGVTIVCAGLAMVSPVEMV).

Belongs to the DcuC/DcuD transporter (TC 2.A.61) family.

Its subcellular location is the cell membrane. This is an uncharacterized protein from Haemophilus influenzae (strain ATCC 51907 / DSM 11121 / KW20 / Rd).